The following is a 498-amino-acid chain: ATP synthase subunit beta, chloroplastic (498 aa).

Position 172-179 (172-179 (GGAGVGKT)) interacts with ATP.

The protein belongs to the ATPase alpha/beta chains family. As to quaternary structure, F-type ATPases have 2 components, CF(1) - the catalytic core - and CF(0) - the membrane proton channel. CF(1) has five subunits: alpha(3), beta(3), gamma(1), delta(1), epsilon(1). CF(0) has four main subunits: a(1), b(1), b'(1) and c(9-12).

It localises to the plastid. It is found in the chloroplast thylakoid membrane. It catalyses the reaction ATP + H2O + 4 H(+)(in) = ADP + phosphate + 5 H(+)(out). Produces ATP from ADP in the presence of a proton gradient across the membrane. The catalytic sites are hosted primarily by the beta subunits. This is ATP synthase subunit beta, chloroplastic from Populus alba (White poplar).